The chain runs to 72 residues: uncharacterized protein (72 aa).

Over M1–V12 the chain is Cytoplasmic. Residues A13–V32 traverse the membrane as a helical segment. Residues T33–N46 are Lumenal-facing. A helical transmembrane segment spans residues F47–V69. The Cytoplasmic portion of the chain corresponds to A70–F72.

It belongs to the TPT transporter family. SLC35D subfamily.

Its subcellular location is the membrane. This is an uncharacterized protein from Saccharomyces cerevisiae (strain RM11-1a) (Baker's yeast).